The sequence spans 534 residues: MISKTEDSGDPLDQDFAEVVKQTLDRWHIPGMSVAVVDGPDTWTKGYGLAQLPNTNVTPDTLFYTGSTTKAFTAAVLSLLVDDNKNYPQVQWNTPVNQLLRDDFVLSHEWDTNNITIEDILSHRTGMPRHEFAFGGDYDGHPASLRDIVRSVRYMQRSAPPRTTYQYSNLMFIVASYLIETLTGKWIGDVFREKIWRPLGMDSTYLSLEDARASGKELAQGYLYNSSLPGYEPVPLKNKPEVSGAGAAISNIKDYAKWATALLKRAPDVLSPAGYSAIWSARTVTPTHDPFITPSAYALAWNTQVYQGVEIVWHDGGIDGFGTEIALIPSLGFAVVTQANTTYSSNYAGTALVYHLIDKKLDVAPDKRFDWNKWYEDLERQMKEAVKNARQTFYPTVPSPAPPPTLPIGKYTGNYWHPAYRQLTILWDEERNLLYADRKDSTTPCQLTFIPVSREFFLVRLTVVGAEAMLPAEFRLGPDGTPSMVGILWEPSLGDEKIWLKKEGDTHFKEMYGGIVDSTAGKKRVPDTIHPIDL.

It belongs to the peptidase S12 family.

It participates in secondary metabolite biosynthesis. Its function is as follows. Hydrolase; part of the gene cluster that mediates the biosynthesis of the unguisins, gamma-aminobutyric acid (GABA)-containing fungal cyclic heptapeptides with the amino acid sequence cyclo-(D-Ala1-D-Val2-L-Leu3-beta-MePhe4-D-Ala5-D-Trp6-GABA7) for unguisin H and cyclo-(D-Ala1-D-Ala2-L-Leu3-beta-MePhe4-D-Ala5-D-Trp6-GABA7) for unguisin I. Within the pathway, the hydrolase ungD' catalyzes the hydrolysis between the D-tryptophan and GABA residues of unguisins H and I to produce the corresponding linear peptides. The alanine racemase ungC' catalyzes the interconversion of L-alanine and D-alanine, providing the D-alanine which is accepted by the first adenylation domain of the nonribosomal peptide synthetase (NRPS) ungA', whereas the methyltransferase ungE' provides the (2R,3R)-beta-methylphenylalanine residue incorporated by the module 4. UngA' is the main enzyme within the cluster which condenses the 7 residues using its respective 7 modules. The terminal condensation domain (Ct) is involved in cyclization with D-alanine and thereby releasing of unguisins H and I. The sequence is that of Unguisins hydrolase ungD' from Aspergillus campestris (strain IBT 28561).